The primary structure comprises 262 residues: Acyl-[acyl-carrier-protein]--UDP-N-acetylglucosamine O-acyltransferase (262 aa).

Belongs to the transferase hexapeptide repeat family. LpxA subfamily. As to quaternary structure, homotrimer.

It localises to the cytoplasm. It catalyses the reaction a (3R)-hydroxyacyl-[ACP] + UDP-N-acetyl-alpha-D-glucosamine = a UDP-3-O-[(3R)-3-hydroxyacyl]-N-acetyl-alpha-D-glucosamine + holo-[ACP]. It participates in glycolipid biosynthesis; lipid IV(A) biosynthesis; lipid IV(A) from (3R)-3-hydroxytetradecanoyl-[acyl-carrier-protein] and UDP-N-acetyl-alpha-D-glucosamine: step 1/6. Functionally, involved in the biosynthesis of lipid A, a phosphorylated glycolipid that anchors the lipopolysaccharide to the outer membrane of the cell. This is Acyl-[acyl-carrier-protein]--UDP-N-acetylglucosamine O-acyltransferase from Yersinia enterocolitica serotype O:8 / biotype 1B (strain NCTC 13174 / 8081).